The chain runs to 339 residues: Serpentine receptor class delta-32 (339 aa).

The next 7 membrane-spanning stretches (helical) occupy residues 14 to 34, 45 to 65, 94 to 114, 128 to 148, 188 to 208, 237 to 257, and 269 to 289; these read AAVV…LIFF, VFLA…LLTV, IFTT…LSMV, SGAF…VVSI, LWVA…MFWC, ALTV…LIFL, and FGYI…LVTI.

It belongs to the nematode receptor-like protein srd family.

The protein resides in the membrane. In Caenorhabditis elegans, this protein is Serpentine receptor class delta-32 (srd-32).